The chain runs to 124 residues: Protein CYSTEINE-RICH TRANSMEMBRANE MODULE 10 (124 aa).

A disordered region spans residues 1-103; sequence MSYQDPQHPV…PKNKKDKKDS (103 aa). Composition is skewed to pro residues over residues 27 to 40 and 65 to 88; these read AGYPPPAGYPPPQY and GYPPPQYPQGHPPQYPYQGPPPPH. A helical membrane pass occupies residues 101-118; sequence KDSGGFMEGCLAMLCCCV.

This sequence belongs to the CYSTM1 family. In terms of assembly, heterodimers. Interacts with CYSTM7 and WIH1/CYSTM13. In terms of tissue distribution, mostly expressed in stems and,at low levels, in stems, roots, flowers, siliques and leaves.

It is found in the cell membrane. The protein resides in the cytoplasm. Involved in resistance to abiotic stress. In Arabidopsis thaliana (Mouse-ear cress), this protein is Protein CYSTEINE-RICH TRANSMEMBRANE MODULE 10.